The sequence spans 316 residues: tRNA dimethylallyltransferase (316 aa).

G9–S16 lines the ATP pocket. Substrate is bound at residue T11 to S16. Interaction with substrate tRNA regions lie at residues D34–Q37 and Q158–R162.

This sequence belongs to the IPP transferase family. In terms of assembly, monomer. It depends on Mg(2+) as a cofactor.

It carries out the reaction adenosine(37) in tRNA + dimethylallyl diphosphate = N(6)-dimethylallyladenosine(37) in tRNA + diphosphate. Functionally, catalyzes the transfer of a dimethylallyl group onto the adenine at position 37 in tRNAs that read codons beginning with uridine, leading to the formation of N6-(dimethylallyl)adenosine (i(6)A). The protein is tRNA dimethylallyltransferase of Hyphomonas neptunium (strain ATCC 15444).